The primary structure comprises 357 residues: Multiple sugar-binding periplasmic protein SbpA (357 aa).

Positions 1–20 are cleaved as a signal peptide; sequence MSSSFTTTLAGMAVGMLVLA.

Belongs to the bacterial solute-binding protein 2 family.

The protein localises to the periplasm. Functionally, mediates chemotaxis towards D-galactose, L-arabinose and D-fucose but not towards D-fructose. Probably part of a binding-protein high affinity uptake system. The chain is Multiple sugar-binding periplasmic protein SbpA (sbpA) from Azospirillum brasilense.